The chain runs to 245 residues: OVARIAN TUMOR DOMAIN-containing deubiquitinating enzyme 11 (245 aa).

The disordered stretch occupies residues 1–37 (MDENHRNPFANASTSARASGSTSASSNSSFSSSVADT). Positions 10-35 (ANASTSARASGSTSASSNSSFSSSVA) are enriched in low complexity. The region spanning 101–225 (LAELQMEGDG…EVHYNSLYAN (125 aa)) is the OTU domain. Asp-109 is an active-site residue. Catalysis depends on Cys-112, which acts as the Nucleophile. His-218 is an active-site residue.

It belongs to the peptidase C85 family.

It carries out the reaction Thiol-dependent hydrolysis of ester, thioester, amide, peptide and isopeptide bonds formed by the C-terminal Gly of ubiquitin (a 76-residue protein attached to proteins as an intracellular targeting signal).. Hydrolase that can remove conjugated ubiquitin from proteins in vitro and may therefore play an important regulatory role at the level of protein turnover by preventing degradation. Inactive cysteine protease. This Arabidopsis thaliana (Mouse-ear cress) protein is OVARIAN TUMOR DOMAIN-containing deubiquitinating enzyme 11.